The sequence spans 228 residues: Response regulator SaeR (228 aa).

A Response regulatory domain is found at 3-116 (HLLIVDDEQD…ELVLRINNLL (114 aa)). D51 carries the post-translational modification 4-aspartylphosphate. Positions 127–226 (VEQLSFDELT…VWGLGYKFER (100 aa)) form a DNA-binding region, ompR/PhoB-type.

Post-translationally, phosphorylated by SaeS.

The protein localises to the cytoplasm. Its function is as follows. Member of the two-component regulatory system SaeR/SaeS involved in the regulation of staphylococcal virulence factors in a strain-dependent fashion. Probably functions as a transcriptional regulator via a specific DNA-binding domain, recognizing motifs near the promoter sequences of target genes. The chain is Response regulator SaeR (saeR) from Staphylococcus aureus (strain USA300).